The primary structure comprises 314 residues: MPASLAAVKHKIDSTKSTRQITSAMQMVSTAKLNQIQHHTQTYEVYAEKVKQMLSDLVKSHSATSAASQDDVYAALFKKRAVKKTGVLVITSDRGLVGSYNSNIIKQTLDMMAKHNLDKDNTVFLTVGKTGTEFFKKRGMNVVYEYSGVSDVPTYREVHSIVKTAVQMYSDQVFDEMYMVYSHYVNRITSNVIVHDVLPITEKSLLDDENEAQENTELNNSDVSTAHVSAEYEFEPSDTEIISALVAQYAESLIYGAILDAKTSEHSSSANAMRSATDNADDIISTLELQYNRARQAAITTEITEITGGMTAQE.

This sequence belongs to the ATPase gamma chain family. As to quaternary structure, F-type ATPases have 2 components, CF(1) - the catalytic core - and CF(0) - the membrane proton channel. CF(1) has five subunits: alpha(3), beta(3), gamma(1), delta(1), epsilon(1). CF(0) has three main subunits: a, b and c.

It is found in the cell membrane. Its function is as follows. Produces ATP from ADP in the presence of a proton gradient across the membrane. The gamma chain is believed to be important in regulating ATPase activity and the flow of protons through the CF(0) complex. The protein is ATP synthase gamma chain of Limosilactobacillus reuteri (strain DSM 20016) (Lactobacillus reuteri).